Here is a 252-residue protein sequence, read N- to C-terminus: UPF0246 protein LJ_0535 (252 aa).

This sequence belongs to the UPF0246 family.

This chain is UPF0246 protein LJ_0535, found in Lactobacillus johnsonii (strain CNCM I-12250 / La1 / NCC 533).